The chain runs to 525 residues: Sterol O-acyltransferase 2 (525 aa).

Disordered stretches follow at residues 1-34 (MQPK…THGT) and 77-97 (QDRP…ELHP). Topologically, residues 1 to 119 (MQPKVPQLRR…IDELMEVQHF (119 aa)) are cytoplasmic. Positions 9–23 (RRREGLGEEQEKGAR) are enriched in basic and acidic residues. Histidine 118 serves as a coordination point for cholesterol. Residues 120–141 (RTIYHMFIAGLCVLIISTLAID) form a helical membrane-spanning segment. The Lumenal segment spans residues 142–161 (FIDEGRLMLEFDLLLFSFGQ). A helical transmembrane segment spans residues 162 to 187 (LPLALMTWVPMFLSTLLVPYQTLWLW). Topologically, residues 188–199 (ARPRAGGAWMLG) are cytoplasmic. Residues 200–223 (ASLGCVLLAAHAVVLCVLPVHVSV) form a helical membrane-spanning segment. Topologically, residues 224–231 (RHELPPAS) are lumenal. A helical membrane pass occupies residues 232–255 (RCVLVFEQVRLLMKSYSFLRETVP). Residues 256–296 (GIFCVRGGKGISPPSFSSYLYFLFCPTLIYRETYPRTPSIR) are Cytoplasmic-facing. Cysteine sulfenic acid (-SOH); alternate is present on cysteine 280. Residue cysteine 280 forms a Glycyl cysteine thioester (Cys-Gly) (interchain with G-Cter in ubiquitin); alternate linkage. Residues 297–329 (WNYVAKNFAQVLGCLLYACFILGRLCVPVFANM) form a helical membrane-spanning segment. The Lumenal portion of the chain corresponds to 330-346 (SREPFSTRALLLSILHA). A helical transmembrane segment spans residues 347–372 (TGPGIFMLLLIFFAFLHCWLNAFAEM). Over 373 to 420 (LRFGDRMFYRDWWNSTSFSNYYRTWNVVVHDWLYSYVYQDGLWLLGRR) the chain is Cytoplasmic. Residues 380–386 (FYRDWWN) carry the FYXDWWN motif motif. An acyl-CoA contacts are provided by asparagine 392, arginine 395, asparagine 398, histidine 402, tyrosine 410, and serine 433. A helical membrane pass occupies residues 421-445 (ARGVAMLGVFLVSAVVHEYIFCFVL). Histidine 437 is an active-site residue. Residues 446-451 (GFFYPV) are Lumenal-facing. A helical membrane pass occupies residues 452–467 (MLMLFLVFGGLLNFTM). At 468–473 (NDRHTG) the chain is on the cytoplasmic side. Residues 474–505 (PAWNILMWTFLFMGQGIQVSLYCQEWYARRHC) traverse the membrane as a helical segment. The Lumenal segment spans residues 506–525 (PLPQTTFWGMVTPRSWSCHP).

It belongs to the membrane-bound acyltransferase family. Sterol o-acyltransferase subfamily. As to quaternary structure, may form homo- or heterodimers. Interacts with INSIG1; the interaction is direct and promotes association with AMFR/gp78. In terms of processing, polyubiquitinated by AMFR/gp78 at Cys-280, leading to its degradation when the lipid levels are low. Association with AMFR/gp78 is mediated via interaction with INSIG1. High concentration of cholesterol and fatty acid results in Cys-280 oxidation, preventing ubiquitination at the same site, resulting in protein stabilization. Post-translationally, oxidized at Cys-280: high concentration of cholesterol and fatty acid induce reactive oxygen species, which oxidizes Cys-280, preventing ubiquitination at the same site, and resulting in protein stabilization.

The protein resides in the endoplasmic reticulum membrane. The catalysed reaction is a sterol + a long-chain fatty acyl-CoA = a long-chain 3-hydroxysterol ester + CoA. It catalyses the reaction cholesterol + an acyl-CoA = a cholesterol ester + CoA. The enzyme catalyses cholesterol + (9Z)-octadecenoyl-CoA = cholesteryl (9Z-octadecenoate) + CoA. It carries out the reaction (5Z,8Z,11Z,14Z,17Z)-eicosapentaenoyl-CoA + cholesterol = (5Z,8Z,11Z,14Z,17Z-eicosapentaenoyl)-cholesterol + CoA. The catalysed reaction is (9Z,12Z,15Z)-octadecatrienoyl-CoA + cholesterol = (9Z,12Z,15Z-octadecatrienoyl)-cholesterol + CoA. It catalyses the reaction (5Z,8Z,11Z,14Z)-eicosatetraenoyl-CoA + cholesterol = cholesteryl (5Z,8Z,11Z,14Z)-eicosatetraenoate + CoA. Catalyzes the formation of fatty acid-cholesterol esters, which are less soluble in membranes than cholesterol. Plays a role in lipoprotein assembly and dietary cholesterol absorption. Utilizes oleoyl-CoA ((9Z)-octadecenoyl-CoA) and linolenoyl-CoA ((9Z,12Z,15Z)-octadecatrienoyl-CoA) as substrates. May provide cholesteryl esters for lipoprotein secretion from hepatocytes and intestinal mucosa. In Mus musculus (Mouse), this protein is Sterol O-acyltransferase 2.